A 495-amino-acid chain; its full sequence is REST corepressor 3 (495 aa).

Residues 1–83 enclose the ELM2 domain; that stretch reads MRVGAEYQAR…KSLADLPNFT (83 aa). Lysine 20 is covalently cross-linked (Glycyl lysine isopeptide (Lys-Gly) (interchain with G-Cter in SUMO2)). One can recognise an SANT 1 domain in the interval 84–135; the sequence is PFPDEWTVEDKVLFEQAFSFHGKSFHRIQQMLPDKTIASLVKYYYSWKKTRS. The tract at residues 147 to 219 is disordered; the sequence is LANRHNQGDS…SQRSKCRPPK (73 aa). A phosphoserine mark is found at serine 156 and serine 171. Basic and acidic residues predominate over residues 162–184; it reads ETHPMDGNDSDYDPKKEAKKEGN. A Glycyl lysine isopeptide (Lys-Gly) (interchain with G-Cter in SUMO2) cross-link involves residue lysine 193. A compositionally biased stretch (basic residues) spans 205–217; sequence QHRHHSQRSKCRP. Positions 237–273 form a coiled coil; it reads AANTILRQLDMELISLKRQVQNAKQVNSALKQKMEGG. A Glycyl lysine isopeptide (Lys-Gly) (interchain with G-Cter in SUMO2) cross-link involves residue lysine 285. Positions 285–336 constitute an SANT 2 domain; the sequence is KINARWTTEEQLLAVQGVRKYGKDFQAIADVIGNKTVGQVKNFFVNYRRRFN. A disordered region spans residues 346–495; it reads AEQGTQASNG…IQTDSQSSLH (150 aa). Residues 348–357 are compositionally biased toward polar residues; sequence QGTQASNGDA. A Phosphothreonine modification is found at threonine 376. Over residues 393 to 405 the composition is skewed to pro residues; it reads PSPPAPSSTPTPT. Low complexity predominate over residues 419–428; sequence RPTLPAAPAL. An asymmetric dimethylarginine mark is found at arginine 445 and arginine 457. The segment covering 475–495 has biased composition (polar residues); sequence VGGQQPPSLIGIQTDSQSSLH.

This sequence belongs to the CoREST family.

The protein resides in the nucleus. In terms of biological role, may act as a component of a corepressor complex that represses transcription. The polypeptide is REST corepressor 3 (RCOR3) (Homo sapiens (Human)).